The primary structure comprises 883 residues: Serine/threonine-protein phosphatase BSL1 homolog (883 aa).

4 Kelch repeats span residues 64–113 (ASSG…AVGT), 221–271 (MLLL…VFVG), 273–323 (RLHV…DHDA), and 341–387 (QIYI…NRNH). 3 disordered regions span residues 381 to 402 (ENQN…STDK), 430 to 466 (SHAS…SLEP), and 499 to 525 (NESR…QRSP). Polar residues predominate over residues 385-399 (RNHNFNSDSPTTNNS). Positions 586, 588, 620, and 652 each coordinate Mn(2+). The active-site Proton donor is the H653. Mn(2+) contacts are provided by H705 and H784. Residues 861–883 (QRPPTPTRGRPQSASDRNSLAYI) are disordered. Positions 872–883 (QSASDRNSLAYI) are enriched in polar residues.

Belongs to the PPP phosphatase family. BSU subfamily. As to quaternary structure, interacts with the phosphorylated form of BSK3. Mn(2+) is required as a cofactor.

It localises to the nucleus. It carries out the reaction O-phospho-L-seryl-[protein] + H2O = L-seryl-[protein] + phosphate. The enzyme catalyses O-phospho-L-threonyl-[protein] + H2O = L-threonyl-[protein] + phosphate. The protein is Serine/threonine-protein phosphatase BSL1 homolog (BSL1) of Oryza sativa subsp. japonica (Rice).